We begin with the raw amino-acid sequence, 170 residues long: MKQEKTLLLQEVEDKISAAQGFILLRYLRFTAAYSREFRNSLSGVSAEFEVLKKRIFFKAIEAAGLEVDCSDTDGHLGVVFSCGDPVSAAKQVLDFNKQHKDSLVFLAGRMDNASLSGAEVEAVAKLPSLKELRQQVVGLFAAPMSQVVGIMNSVLSGVISCVDQKAGKN.

Belongs to the universal ribosomal protein uL10 family. Part of the ribosomal stalk of the 50S ribosomal subunit. The N-terminus interacts with L11 and the large rRNA to form the base of the stalk. The C-terminus forms an elongated spine to which L12 dimers bind in a sequential fashion forming a multimeric L10(L12)X complex.

In terms of biological role, forms part of the ribosomal stalk, playing a central role in the interaction of the ribosome with GTP-bound translation factors. This chain is Large ribosomal subunit protein uL10 (rplJ), found in Chlamydia pneumoniae (Chlamydophila pneumoniae).